A 125-amino-acid polypeptide reads, in one-letter code: UPF0231 protein APP7_1023 (125 aa).

Belongs to the UPF0231 family.

The chain is UPF0231 protein APP7_1023 from Actinobacillus pleuropneumoniae serotype 7 (strain AP76).